The sequence spans 45 residues: Cytochrome b559 subunit beta (45 aa).

An N-acetylthreonine modification is found at T2. Topologically, residues 2 to 17 are cytoplasmic; sequence TSNTPNQEPVSYPIFT. Residues 18-42 traverse the membrane as a helical segment; that stretch reads VRWVAVHTLAVPTIFFLGAIAAMQF. A heme-binding site is contributed by H24. The Lumenal segment spans residues 43–45; sequence IQR.

As to quaternary structure, heterodimer of an alpha subunit and a beta subunit. PSII is composed of 1 copy each of membrane proteins PsbA, PsbB, PsbC, PsbD, PsbE, PsbF, PsbH, PsbI, PsbJ, PsbK, PsbL, PsbM, PsbT, PsbX, PsbY, PsbZ, Psb30/Ycf12, peripheral proteins PsbO, CyanoQ (PsbQ), PsbU, PsbV and a large number of cofactors. It forms dimeric complexes. Part of a photosystem II (PSII) assembly intermediate complex PSII-I; crystallized from a strain deleted of psbJ, it forms monomeric PSII before addition of the oxygen evolving complex. PSII-I includes 3 assembly factors not found in mature PSII (Psb27, Psb28 and Psb34). It depends on heme b as a cofactor.

The protein localises to the cellular thylakoid membrane. In terms of biological role, this b-type cytochrome is tightly associated with the reaction center of photosystem II (PSII). PSII is a light-driven water:plastoquinone oxidoreductase that uses light energy to abstract electrons from H(2)O, generating O(2) and a proton gradient subsequently used for ATP formation. It consists of a core antenna complex that captures photons, and an electron transfer chain that converts photonic excitation into a charge separation. This chain is Cytochrome b559 subunit beta, found in Thermosynechococcus vestitus (strain NIES-2133 / IAM M-273 / BP-1).